A 79-amino-acid chain; its full sequence is Sec-independent protein translocase protein TatA (79 aa).

The helical transmembrane segment at 1–21 (MGGFTSIWHWVIVLLVIVLLF) threads the bilayer. A disordered region spans residues 48–79 (EEEAKNEPKTLDAQATQTKVHESSEIKSKQES). The span at 66 to 79 (KVHESSEIKSKQES) shows a compositional bias: basic and acidic residues.

The protein belongs to the TatA/E family. As to quaternary structure, the Tat system comprises two distinct complexes: a TatABC complex, containing multiple copies of TatA, TatB and TatC subunits, and a separate TatA complex, containing only TatA subunits. Substrates initially bind to the TatABC complex, which probably triggers association of the separate TatA complex to form the active translocon.

It is found in the cell inner membrane. In terms of biological role, part of the twin-arginine translocation (Tat) system that transports large folded proteins containing a characteristic twin-arginine motif in their signal peptide across membranes. TatA could form the protein-conducting channel of the Tat system. This chain is Sec-independent protein translocase protein TatA, found in Helicobacter pylori (strain ATCC 700392 / 26695) (Campylobacter pylori).